Reading from the N-terminus, the 350-residue chain is 5'-tyrosyl-DNA phosphodiesterase (350 aa).

The tract at residues 113–117 (NIDGL) is interaction with 5' end of substrate DNA. Mg(2+) contacts are provided by Asp115 and Glu145. The tract at residues 219 to 224 (HLESMR) is interaction with 5' end of substrate DNA. Asp258 (proton donor/acceptor) is an active-site residue. An interaction with 5' end of substrate DNA region spans residues 260–262 (NLR).

Belongs to the CCR4/nocturin family. TTRAP/TDP2 subfamily. Mg(2+) is required as a cofactor. Mn(2+) serves as cofactor.

It is found in the nucleus. Its subcellular location is the PML body. DNA repair enzyme that can remove a variety of covalent adducts from DNA through hydrolysis of a 5'-phosphodiester bond, giving rise to DNA with a free 5' phosphate. Catalyzes the hydrolysis of dead-end complexes between DNA and the topoisomerase 2 (top2) active site tyrosine residue. Hydrolyzes 5'-phosphoglycolates on protruding 5' ends on DNA double-strand breaks (DSBs) due to DNA damage by radiation and free radicals. The sequence is that of 5'-tyrosyl-DNA phosphodiesterase from Caenorhabditis briggsae.